Here is a 579-residue protein sequence, read N- to C-terminus: UPF0324 membrane protein DVU_0943 (579 aa).

Transmembrane regions (helical) follow at residues 26–45, 193–215, 225–243, 250–272, 305–327, 369–391, 430–452, 473–495, 515–533, and 546–568; these read YWAI…LFLA, AFNI…AIGM, FLVG…QMMG, YWGI…TVGT, IGIP…TFIF, LTLS…PAFI, AATI…AVYW, FPKF…GSLG, LRGW…ATNF, and LILY…YIMF.

The protein belongs to the UPF0324 family.

The protein localises to the cell membrane. In Nitratidesulfovibrio vulgaris (strain ATCC 29579 / DSM 644 / CCUG 34227 / NCIMB 8303 / VKM B-1760 / Hildenborough) (Desulfovibrio vulgaris), this protein is UPF0324 membrane protein DVU_0943.